The chain runs to 354 residues: Rhodopsin (354 aa).

Topologically, residues 1–36 (MNGTEGPDFYVPMVNTTGIVRSPYDYPQYYLVNPAA) are extracellular. Asn2 and Asn15 each carry an N-linked (GlcNAc...) asparagine glycan. Residues 37 to 61 (FSMLAAYMFFLILVGFPVNFLTLYV) form a helical membrane-spanning segment. Topologically, residues 62 to 73 (TMEHKKLRTPLN) are cytoplasmic. A helical membrane pass occupies residues 74-96 (YILLNLAVANLFMVIGGFTTTMY). Residues 97 to 110 (TSMHGYFVLGRTGC) lie on the Extracellular side of the membrane. Cys110 and Cys187 are joined by a disulfide. Residues 111 to 133 (NLEGFFATLGGEIALWSLVVLAV) form a helical membrane-spanning segment. The 'Ionic lock' involved in activated form stabilization signature appears at 134-136 (ERW). Residues 134 to 152 (ERWVVVCKPISNFRFGENH) are Cytoplasmic-facing. The chain crosses the membrane as a helical span at residues 153 to 173 (AVMGVSFTWLMACACSVPPLF). Topologically, residues 174 to 202 (GWSRYIPEGMQCSCGIDYYTRAPGYNNES) are extracellular. Residues 203-224 (FVIYMFVCHFSIPLTIIFFCYG) form a helical membrane-spanning segment. The Cytoplasmic segment spans residues 225–252 (RLLCAVKDAAAAQQESETTQRAEREVSR). A helical transmembrane segment spans residues 253–274 (MVVIMVIGFLICWLPYASVAWF). Topologically, residues 275–286 (IFTHQGSEFGPV) are extracellular. The chain crosses the membrane as a helical span at residues 287–308 (FMTIPAFFAKSSAIYNPMIYIC). The residue at position 296 (Lys296) is an N6-(retinylidene)lysine. Topologically, residues 309 to 354 (MNKQFRHCMITTLCCGKNPFEEEEGASTTASKTEASSVSSSHVSPA) are cytoplasmic. S-palmitoyl cysteine attachment occurs at residues Cys322 and Cys323. A disordered region spans residues 333 to 354 (GASTTASKTEASSVSSSHVSPA). Residues 334 to 354 (ASTTASKTEASSVSSSHVSPA) show a composition bias toward low complexity.

The protein belongs to the G-protein coupled receptor 1 family. Opsin subfamily. Post-translationally, phosphorylated on some or all of the serine and threonine residues present in the C-terminal region. Contains one covalently linked retinal chromophore.

Its subcellular location is the membrane. The protein localises to the cell projection. The protein resides in the cilium. It localises to the photoreceptor outer segment. In terms of biological role, photoreceptor required for image-forming vision at low light intensity. While most salt water fish species use retinal as chromophore, most freshwater fish use 3-dehydroretinal, or a mixture of retinal and 3-dehydroretinal. Light-induced isomerization of 11-cis to all-trans retinal triggers a conformational change that activates signaling via G-proteins. Subsequent receptor phosphorylation mediates displacement of the bound G-protein alpha subunit by arrestin and terminates signaling. The sequence is that of Rhodopsin (rho) from Zeus faber (John Dory).